The chain runs to 476 residues: Cysteine--tRNA ligase (476 aa).

Residue cysteine 27 participates in Zn(2+) binding. The short motif at 29–39 (PTTYNYIHLGN) is the 'HIGH' region element. Zn(2+) contacts are provided by cysteine 207, histidine 232, and glutamate 236. Residues 264–268 (KMSKS) carry the 'KMSKS' region motif. Lysine 267 contacts ATP.

The protein belongs to the class-I aminoacyl-tRNA synthetase family. In terms of assembly, monomer. Requires Zn(2+) as cofactor.

The protein localises to the cytoplasm. The enzyme catalyses tRNA(Cys) + L-cysteine + ATP = L-cysteinyl-tRNA(Cys) + AMP + diphosphate. The polypeptide is Cysteine--tRNA ligase (Moorella thermoacetica (strain ATCC 39073 / JCM 9320)).